The primary structure comprises 237 residues: 2-C-methyl-D-erythritol 4-phosphate cytidylyltransferase (237 aa).

It belongs to the IspD/TarI cytidylyltransferase family. IspD subfamily. In terms of assembly, homodimer.

The enzyme catalyses 2-C-methyl-D-erythritol 4-phosphate + CTP + H(+) = 4-CDP-2-C-methyl-D-erythritol + diphosphate. Its pathway is isoprenoid biosynthesis; isopentenyl diphosphate biosynthesis via DXP pathway; isopentenyl diphosphate from 1-deoxy-D-xylulose 5-phosphate: step 2/6. Functionally, catalyzes the formation of 4-diphosphocytidyl-2-C-methyl-D-erythritol from CTP and 2-C-methyl-D-erythritol 4-phosphate (MEP). This is 2-C-methyl-D-erythritol 4-phosphate cytidylyltransferase from Pectobacterium atrosepticum (strain SCRI 1043 / ATCC BAA-672) (Erwinia carotovora subsp. atroseptica).